A 454-amino-acid polypeptide reads, in one-letter code: Elongation factor Tu, mitochondrial (454 aa).

The transit peptide at 1–51 directs the protein to the mitochondrion; it reads MASVVLRNPSSKRLVPFSSQIYSRCGASVTSSYSISHSIGGDDLSSSTFGT. The tr-type G domain maps to 65 to 261; it reads KPHVNVGTIG…AVDEYIPDPV (197 aa). The tract at residues 74 to 81 is G1; it reads GHVDHGKT. 74–81 lines the GTP pocket; it reads GHVDHGKT. Threonine 82 carries the phosphothreonine modification. The interval 115-119 is G2; the sequence is GITIA. A G3 region spans residues 136 to 139; the sequence is DCPG. Residues 136 to 140 and 191 to 194 contribute to the GTP site; these read DCPGH and NKVD. Residues 191 to 194 form a G4 region; the sequence is NKVD. A G5 region spans residues 229-231; sequence SAL.

It belongs to the TRAFAC class translation factor GTPase superfamily. Classic translation factor GTPase family. EF-Tu/EF-1A subfamily.

It is found in the mitochondrion. This protein promotes the GTP-dependent binding of aminoacyl-tRNA to the A-site of ribosomes during protein biosynthesis. The sequence is that of Elongation factor Tu, mitochondrial (TUFA) from Arabidopsis thaliana (Mouse-ear cress).